The chain runs to 205 residues: Guanylate kinase (205 aa).

Residues 7–185 (GNIFIISAAS…AEGDLLHIVN (179 aa)) enclose the Guanylate kinase-like domain. 14–21 (AASGTGKT) lines the ATP pocket.

Belongs to the guanylate kinase family.

The protein localises to the cytoplasm. The catalysed reaction is GMP + ATP = GDP + ADP. Functionally, essential for recycling GMP and indirectly, cGMP. The protein is Guanylate kinase of Neisseria gonorrhoeae (strain ATCC 700825 / FA 1090).